A 516-amino-acid chain; its full sequence is Probable inorganic phosphate transporter 1-6 (516 aa).

Residue Ala2 is modified to N-acetylalanine. Over 2 to 25 the chain is Cytoplasmic; sequence ANEEQGSILKALDVAKTQWYHVTA. The chain crosses the membrane as a helical span at residues 26-46; sequence VVVSGMGFFTDSYDLFVISLI. Topologically, residues 47–71 are extracellular; that stretch reads TKLLGRIYYQVPGSSSPGSLPDGIS. Residues 72–92 form a helical membrane-spanning segment; that stretch reads AAVSGVAFAGTFIGQIFFGCL. The Cytoplasmic segment spans residues 93–100; sequence GDKLGRKR. Residues 101 to 121 form a helical membrane-spanning segment; it reads VYGLTLLIMTICSICSGLSLG. At 122 to 132 the chain is on the extracellular side; that stretch reads RDPKTVMVTLC. Residues 133-153 traverse the membrane as a helical segment; that stretch reads FFRFWLGFGIGGDYPLSATIM. Residues 154-162 are Cytoplasmic-facing; it reads SEYSNKRTR. Residues 163–183 traverse the membrane as a helical segment; it reads GAFIAAVFGMQGIGILAAGAV. At 184-212 the chain is on the extracellular side; it reads SLLVSAVFESKFPSRAYILDGAASTVPQA. A helical transmembrane segment spans residues 213-233; that stretch reads DYVWRIILMVGALPALLTYYW. The Cytoplasmic portion of the chain corresponds to 234 to 293; it reads RMKMPETARYTALVSKNAEQAALDMTKVLNVDIEASAAKNDQARVSSDEFGLFSMKFLRR. The helical transmembrane segment at 294 to 314 threads the bilayer; that stretch reads HGLHLLGTASTWFLLDIAFYS. Topologically, residues 315–349 are extracellular; the sequence is QNLFQKDIFTTIGWLPSAKTMNAIQELYMIAKAQT. The helical transmembrane segment at 350–370 threads the bilayer; the sequence is IIACCSTVPGYFFTVGFIDYM. At 371 to 374 the chain is on the cytoplasmic side; the sequence is GRKK. A helical transmembrane segment spans residues 375–395; the sequence is IQIMGFAMMTIFMLSLAIPYH. The Extracellular segment spans residues 396–403; it reads HWTLPANR. Residues 404-424 traverse the membrane as a helical segment; that stretch reads IGFVVLYSFTFFFSNFGPNAT. Topologically, residues 425–442 are cytoplasmic; sequence TFIVPAEIFPARIRSTCH. Residues 443-463 traverse the membrane as a helical segment; sequence GISAASGKAGAMVGSFGFSAL. At 464-471 the chain is on the extracellular side; that stretch reads VKALGMSN. Residues 472-492 form a helical membrane-spanning segment; that stretch reads TLYIMAGINLLGLLLTFTIPE. The Cytoplasmic portion of the chain corresponds to 493 to 516; it reads TNGKSLEELSGETEPEKIKEKIVV.

This sequence belongs to the major facilitator superfamily. Phosphate:H(+) symporter (TC 2.A.1.9) family. Expressed in anthers, tapetumand mature pollen and, to a lower extent, in hydathodes and vascular tissues of cotyledons of flowering plants.

The protein localises to the membrane. Functionally, high-affinity transporter for external inorganic phosphate. The sequence is that of Probable inorganic phosphate transporter 1-6 (PHT1-6) from Arabidopsis thaliana (Mouse-ear cress).